The chain runs to 436 residues: 5-hydroxytryptamine receptor 6 (436 aa).

The Extracellular portion of the chain corresponds to M1 to G27. N9 carries an N-linked (GlcNAc...) asparagine glycan. Residues W28–C52 form a helical membrane-spanning segment. The Cytoplasmic segment spans residues T53–N62. Residues F63–L88 form a helical membrane-spanning segment. Over Y89–R96 the chain is Extracellular. Residues G97–L122 traverse the membrane as a helical segment. An intrachain disulfide couples C99 to C180. Residue D106 coordinates serotonin. At D123–R142 the chain is on the cytoplasmic side. Residues A143 to H167 form a helical membrane-spanning segment. The Extracellular segment spans residues E168–S185. Residues L186–C209 form a helical membrane-spanning segment. Over R210–A266 the chain is Cytoplasmic. The helical transmembrane segment at S267–V293 threads the bilayer. Position 288 (N288) interacts with serotonin. The Extracellular segment spans residues C294–P299. Residues G300–F323 form a helical membrane-spanning segment. The Cytoplasmic segment spans residues M324–P436.

Belongs to the G-protein coupled receptor 1 family. As to quaternary structure, interacts with MTOR, RPTOR and NF1. Interacts with CDK5. In terms of tissue distribution, localized exclusively in the central nervous system, predominantly in the corpus striatum but also in various limbic and cortical regions.

It localises to the cell membrane. G-protein coupled receptor for 5-hydroxytryptamine (serotonin), a biogenic hormone that functions as a neurotransmitter, a hormone and a mitogen. Also has a high affinity for tricyclic psychotropic drugs. Ligand binding causes a conformation change that triggers signaling via guanine nucleotide-binding proteins (G proteins) and modulates the activity of downstream effectors. HTR6 is coupled to G(s) G alpha proteins and mediates activation of adenylate cyclase activity. Controls pyramidal neurons migration during corticogenesis, through the regulation of CDK5 activity. Is an activator of mTOR signaling. The protein is 5-hydroxytryptamine receptor 6 (Htr6) of Rattus norvegicus (Rat).